The following is a 240-amino-acid chain: Adenylate dimethylallyltransferase (240 aa).

The protein belongs to the isopentenyl transferase family.

The catalysed reaction is dimethylallyl diphosphate + AMP = N(6)-(dimethylallyl)adenosine 5'-phosphate + diphosphate. Transfers dimethylallyl groups to AMP as part of the biosynthesis of cytokinin phytohormones. The chain is Adenylate dimethylallyltransferase (ipt) from Agrobacterium vitis (Rhizobium vitis).